A 436-amino-acid chain; its full sequence is GTPase Der (436 aa).

EngA-type G domains are found at residues Pro4 to Pro167 and Val176 to Ser351. GTP-binding positions include Gly10–Ser17, Asp57–Ile61, Asn119–Asp122, Gly182–Ser189, Asp229–Met233, and Asn294–Asp297. Positions Leu352–Lys436 constitute a KH-like domain.

Belongs to the TRAFAC class TrmE-Era-EngA-EngB-Septin-like GTPase superfamily. EngA (Der) GTPase family. Associates with the 50S ribosomal subunit.

In terms of biological role, GTPase that plays an essential role in the late steps of ribosome biogenesis. This chain is GTPase Der, found in Bacillus velezensis (strain DSM 23117 / BGSC 10A6 / LMG 26770 / FZB42) (Bacillus amyloliquefaciens subsp. plantarum).